Here is a 487-residue protein sequence, read N- to C-terminus: MAEEQREISHENNVSLGSAETAIPLTNVSISPTKKEEQKTVYLVLFGRTIYVESSSLESEETVMPIVDVPKSPAKEDLTTHCSLDAESSEKGFPVDPYMGILGNNPNINSNVTCAGNKDLTEDIIKFKKMRSLSKEKIVEEKGTRVLTELPPYTWTIKKTLKESDINHQCRLLLNTTDAENHIMRHLPTDDQKKIQEGIGVDVKAYDHDTYTEHDMVFKRHVKTSKSYVFNGGWAKAFVGRRELKEGDKIGLFWAKKSQTFMSQEQQGTSPLNTDEALKSHHSFSQNPNYIESNLSRRYQTNFSLGSQRISGQFLMIPNPGFVDTSSMTNTHDTSLANFQTVPTTTNPKIILKEEKENEEEQQYWTIKKELTKSDACQRLTLSKSSVEEHILKHLLPEDSQKIDKGKPGITVKVYDNDTDTEHELCLAFQCSYVLKNGWVKTFVKRRGLEEGDMIGLFWECSTSKLHFSVLFRVNAKAPAAEEKEAY.

2 DNA-binding regions (TF-B3) span residues 171-269 and 379-474; these read RLLL…QQGT and RLTL…LFRV.

Its subcellular location is the nucleus. This chain is Putative B3 domain-containing protein At1g78640, found in Arabidopsis thaliana (Mouse-ear cress).